The chain runs to 105 residues: Delta-hexatoxin-Mg1a (105 aa).

An N-terminal signal peptide occupies residues 1–18 (MKTLVIACVALVLVVVHG). Residues 19 to 60 (EVIEEVNEKQLQESVEEKYSLLQRLEKLDEAITAEENRNSRV) constitute a propeptide that is removed on maturation. Disulfide bonds link Cys-63/Cys-77, Cys-70/Cys-82, Cys-76/Cys-93, and Cys-78/Cys-105.

It belongs to the neurotoxin 06 (delta-actx) family. In terms of tissue distribution, expressed by the venom gland.

It localises to the secreted. Functionally, selectively slows channel inactivation of mammalian Nav1.1/SCN1A, Nav1.3/SCN3A, and Nav1.6/SCN8A and shows higher affinity for insect Nav1/para channels (site 3). Induces tonic repetitive firing of nerve impulses in insect neurons accompanied by plateau potentials. The polypeptide is Delta-hexatoxin-Mg1a (Macrothele gigas (Japanese funnel web spider)).